Reading from the N-terminus, the 350-residue chain is Phenylalanine--tRNA ligase alpha subunit (350 aa).

Glu271 serves as a coordination point for Mg(2+).

Belongs to the class-II aminoacyl-tRNA synthetase family. Phe-tRNA synthetase alpha subunit type 1 subfamily. Tetramer of two alpha and two beta subunits. It depends on Mg(2+) as a cofactor.

It localises to the cytoplasm. It carries out the reaction tRNA(Phe) + L-phenylalanine + ATP = L-phenylalanyl-tRNA(Phe) + AMP + diphosphate + H(+). The polypeptide is Phenylalanine--tRNA ligase alpha subunit (Verminephrobacter eiseniae (strain EF01-2)).